Reading from the N-terminus, the 284-residue chain is Undecaprenyl-diphosphatase (284 aa).

Transmembrane regions (helical) follow at residues 7-27 (IILG…TGHL), 44-64 (EMFD…LYFH), 90-110 (LWLK…PLND), 116-136 (FYHF…FIVI), 167-187 (VLSL…ALLI), 197-217 (FTFF…ILHF), 229-249 (FGVL…AIKF), and 259-279 (FTFF…YAAF).

This sequence belongs to the UppP family.

Its subcellular location is the cell membrane. The enzyme catalyses di-trans,octa-cis-undecaprenyl diphosphate + H2O = di-trans,octa-cis-undecaprenyl phosphate + phosphate + H(+). In terms of biological role, catalyzes the dephosphorylation of undecaprenyl diphosphate (UPP). Confers resistance to bacitracin. This is Undecaprenyl-diphosphatase from Lactococcus lactis subsp. cremoris (strain SK11).